Reading from the N-terminus, the 208-residue chain is V-type ATP synthase subunit D (208 aa).

This sequence belongs to the V-ATPase D subunit family.

Produces ATP from ADP in the presence of a proton gradient across the membrane. The protein is V-type ATP synthase subunit D of Streptococcus pyogenes serotype M1.